Reading from the N-terminus, the 265-residue chain is UDP-N-acetylenolpyruvoylglucosamine reductase (265 aa).

The FAD-binding PCMH-type domain maps to 15–169 (GVGGPAELWT…TRVRLKLKER (155 aa)). Arginine 149 is an active-site residue. Positions 182 to 203 (DRARKGQPKRKSAGCAFKNPPG) are disordered. Cysteine 196 (proton donor) is an active-site residue.

Belongs to the MurB family. FAD serves as cofactor.

It localises to the cytoplasm. It carries out the reaction UDP-N-acetyl-alpha-D-muramate + NADP(+) = UDP-N-acetyl-3-O-(1-carboxyvinyl)-alpha-D-glucosamine + NADPH + H(+). The protein operates within cell wall biogenesis; peptidoglycan biosynthesis. Cell wall formation. The chain is UDP-N-acetylenolpyruvoylglucosamine reductase from Thermus thermophilus (strain ATCC BAA-163 / DSM 7039 / HB27).